The primary structure comprises 114 residues: Probable acid stress chaperone HdeA (114 aa).

A signal peptide spans 1–26 (MIKTLFNKNTALAAVAILALSGSAMA). C46 and C94 are joined by a disulfide.

This sequence belongs to the HdeA family.

The protein localises to the periplasm. Its function is as follows. Required for optimal acid stress protection. Exhibits a chaperone-like activity only at low pH by suppressing non-specifically the aggregation of denaturated periplasmic proteins. The sequence is that of Probable acid stress chaperone HdeA from Brucella ovis (strain ATCC 25840 / 63/290 / NCTC 10512).